Reading from the N-terminus, the 885-residue chain is Translation initiation factor IF-2 (885 aa).

2 disordered regions span residues 135–159 (KAKAEAEAKAKAEAEAKAKAKAAAE) and 184–289 (QAEA…PESM). The segment covering 184 to 232 (QAEATKRKQDEEAAKAAEKARLLAEENSKRWAEEERQRLEAERYSDHHI) has biased composition (basic and acidic residues). Residues 253–266 (GRRARNKNTAKSKR) are compositionally biased toward basic residues. Residues 267–276 (GGKDARDGRE) are compositionally biased toward basic and acidic residues. One can recognise a tr-type G domain in the interval 385 to 554 (PRAPVVTIMG…LLQAEVLELK (170 aa)). Positions 394–401 (GHVDHGKT) are G1. 394 to 401 (GHVDHGKT) is a binding site for GTP. The segment at 419-423 (GITQH) is G2. Residues 440 to 443 (DTPG) are G3. GTP is bound by residues 440 to 444 (DTPGH) and 494 to 497 (NKMD). Residues 494 to 497 (NKMD) are G4. Residues 530-532 (SAK) are G5.

Belongs to the TRAFAC class translation factor GTPase superfamily. Classic translation factor GTPase family. IF-2 subfamily.

It localises to the cytoplasm. In terms of biological role, one of the essential components for the initiation of protein synthesis. Protects formylmethionyl-tRNA from spontaneous hydrolysis and promotes its binding to the 30S ribosomal subunits. Also involved in the hydrolysis of GTP during the formation of the 70S ribosomal complex. The polypeptide is Translation initiation factor IF-2 (Shewanella sp. (strain MR-7)).